We begin with the raw amino-acid sequence, 262 residues long: Elongator complex protein 5 (262 aa).

Disordered stretches follow at residues 181-214 (TPLDGGLPAGASPKQPSPEAEQTTEPASSTFKIE) and 229-262 (PYERTSEPSEGNIIYTPDADDDFDEEDPDEDLCI). Residues 200–211 (AEQTTEPASSTF) show a composition bias toward polar residues. Residues 246-262 (DADDDFDEEDPDEDLCI) show a composition bias toward acidic residues.

This sequence belongs to the ELP5 family. In terms of assembly, component of the elongator complex composed of Elp1, Elp2, Elp3, Elp4, Elp5 and Elp6. The elongator complex associates with and stabilizes microtubules; efficient interaction requires the full complex.

It is found in the cytoplasm. The protein resides in the nucleus. Its subcellular location is the cytoskeleton. The protein localises to the spindle. It functions in the pathway tRNA modification; 5-methoxycarbonylmethyl-2-thiouridine-tRNA biosynthesis. Functionally, component of the elongator complex, which is required for multiple tRNA modifications, including mcm5U (5-methoxycarbonylmethyl uridine), mcm5s2U (5-methoxycarbonylmethyl-2-thiouridine), and ncm5U (5-carbamoylmethyl uridine). The elongator complex catalyzes the formation of carboxymethyluridine in the wobble base at position 34 in tRNAs. Binding by the elongator complex stabilizes microtubules and promotes their growth. This induces central spindle asymmetry, promoting polarized signaling endosome trafficking during asymmetric cell division and cell fate assignation of sensory organ precursor cells. The sequence is that of Elongator complex protein 5 from Drosophila melanogaster (Fruit fly).